The primary structure comprises 126 residues: Actin-depolymerizing factor (126 aa).

An ADF-H domain is found at 1–126 (EDNCKLKFLE…SFDIIKSRAL (126 aa)).

The protein belongs to the actin-binding proteins ADF family. As to expression, preferentially in mature anther.

Actin-depolymerizing protein. Severs actin filaments (F-actin) and binds to actin monomers. The protein is Actin-depolymerizing factor of Brassica napus (Rape).